Here is a 331-residue protein sequence, read N- to C-terminus: Biotin synthase (331 aa).

The Radical SAM core domain maps to 52 to 277 (PDVEVEGIIS…RTMLRFAGGR (226 aa)). [4Fe-4S] cluster-binding residues include C67, C71, and C74. The [2Fe-2S] cluster site is built by C110, C143, C202, and R272.

It belongs to the radical SAM superfamily. Biotin synthase family. As to quaternary structure, homodimer. [4Fe-4S] cluster is required as a cofactor. [2Fe-2S] cluster serves as cofactor.

The catalysed reaction is (4R,5S)-dethiobiotin + (sulfur carrier)-SH + 2 reduced [2Fe-2S]-[ferredoxin] + 2 S-adenosyl-L-methionine = (sulfur carrier)-H + biotin + 2 5'-deoxyadenosine + 2 L-methionine + 2 oxidized [2Fe-2S]-[ferredoxin]. The protein operates within cofactor biosynthesis; biotin biosynthesis; biotin from 7,8-diaminononanoate: step 2/2. Its function is as follows. Catalyzes the conversion of dethiobiotin (DTB) to biotin by the insertion of a sulfur atom into dethiobiotin via a radical-based mechanism. In Mycolicibacterium gilvum (strain PYR-GCK) (Mycobacterium gilvum (strain PYR-GCK)), this protein is Biotin synthase.